The following is a 526-amino-acid chain: Arp2/3 complex-activating protein rickA (526 aa).

The segment at T305–A356 is disordered. Positions T318–T352 are enriched in pro residues. WH2 domains are found at residues D383 to V400 and S410 to V427. 2 disordered regions span residues R425–N452 and M464–S526. The segment at V448–D484 is central and acidic domains. Residues M464–G480 are compositionally biased toward low complexity. 2 stretches are compositionally biased toward polar residues: residues N481–K491 and T506–S526.

As to quaternary structure, homodimer.

Its subcellular location is the cell surface. Functionally, recruits and activates the Arp2/3 complex, which in turn leads to actin polymerization, promoting Rickettsia motility during infection. In Rickettsia felis (strain ATCC VR-1525 / URRWXCal2) (Rickettsia azadi), this protein is Arp2/3 complex-activating protein rickA (rickA).